The sequence spans 141 residues: Large ribosomal subunit protein uL11 (141 aa).

It belongs to the universal ribosomal protein uL11 family. In terms of assembly, part of the ribosomal stalk of the 50S ribosomal subunit. Interacts with L10 and the large rRNA to form the base of the stalk. L10 forms an elongated spine to which L12 dimers bind in a sequential fashion forming a multimeric L10(L12)X complex. One or more lysine residues are methylated.

Forms part of the ribosomal stalk which helps the ribosome interact with GTP-bound translation factors. The sequence is that of Large ribosomal subunit protein uL11 from Syntrophomonas wolfei subsp. wolfei (strain DSM 2245B / Goettingen).